The chain runs to 789 residues: Phenylalanine--tRNA ligase beta subunit (789 aa).

The region spanning 39 to 149 is the tRNA-binding domain; sequence ADGLEAFRIA…HEAPVGQSYV (111 aa). Positions 399-471 constitute a B5 domain; that stretch reads SAVPVISYDP…RIEGLDNVPS (73 aa). Residues Asp449, Asp455, and Asp459 each contribute to the Mg(2+) site. Residues 696 to 788 enclose the FDX-ACB domain; sequence SMLQPVFRDF…AAAKKGARLR (93 aa).

It belongs to the phenylalanyl-tRNA synthetase beta subunit family. Type 1 subfamily. Tetramer of two alpha and two beta subunits. The cofactor is Mg(2+).

Its subcellular location is the cytoplasm. The catalysed reaction is tRNA(Phe) + L-phenylalanine + ATP = L-phenylalanyl-tRNA(Phe) + AMP + diphosphate + H(+). The chain is Phenylalanine--tRNA ligase beta subunit from Zymomonas mobilis subsp. mobilis (strain ATCC 31821 / ZM4 / CP4).